Here is a 538-residue protein sequence, read N- to C-terminus: Protein NRT1/ PTR FAMILY 5.11 (538 aa).

The next 2 helical transmembrane spans lie at 44–64 (FAYF…LGES) and 74–94 (AWTG…DSYL). Residue threonine 99 is modified to Phosphothreonine. A run of 10 helical transmembrane segments spans residues 100–120 (IIIS…STMI), 134–154 (TIFF…NPCI), 175–194 (SFFN…TRLV), 204–224 (WSLG…LFLL), 308–328 (IPIW…PTFF), 342–362 (GLLV…VVFI), 389–409 (IGTG…VETK), 424–444 (VWWL…TMVG), 463–483 (ALNL…ISVI), and 507–527 (YFYW…LWFA).

Belongs to the major facilitator superfamily. Proton-dependent oligopeptide transporter (POT/PTR) (TC 2.A.17) family. Expressed in shoots and roots.

It is found in the membrane. This Arabidopsis thaliana (Mouse-ear cress) protein is Protein NRT1/ PTR FAMILY 5.11 (NPF5.11).